Consider the following 718-residue polypeptide: SANT and BTB domain regulator of class switch recombination (718 aa).

The SANT domain maps to 21-59 (DMILYPLIGIPQTINWETIARLVPGLTPKECAKRFDELK). The segment covering 118–134 (ASTRNCSSESENCTTHN) has biased composition (polar residues). The tract at residues 118-142 (ASTRNCSSESENCTTHNGGEMTEES) is disordered. A BTB domain is found at 147 to 255 (MVIHVCDEAK…QCIQYCHKNM (109 aa)). Residues 555-576 (SEEEEYTTGSEVTEDEVGDEEE) are compositionally biased toward acidic residues. Disordered stretches follow at residues 555–622 (SEEE…SPFV) and 692–718 (SVPV…GRPA). Residues 580–595 (KQRKKEKPKKFTRQPK) show a composition bias toward basic residues. Residues 604-615 (QRKEKALEKSAS) are compositionally biased toward basic and acidic residues.

The protein belongs to the KIAA1841 family. Homodimer. Interacts (via the BTB domain) with HDAC1 and NCOR2.

Functionally, negatively regulates class switch recombination or isotype switching in splenic B-cells. The chain is SANT and BTB domain regulator of class switch recombination from Homo sapiens (Human).